We begin with the raw amino-acid sequence, 263 residues long: Auxin-responsive protein IAA3 (263 aa).

Disordered regions lie at residues 1-54 and 76-121; these read MSPP…RRPA and RVFP…PAAK. Residues 28–38 show a composition bias toward basic and acidic residues; it reads RADDVDLKGTE. An EAR-like (transcriptional repression) motif is present at residues 39-43; it reads LRLGL. The PB1 domain occupies 158-245; the sequence is FLYVKVSMDG…SCRRLRIMKG (88 aa).

This sequence belongs to the Aux/IAA family. As to quaternary structure, homodimers and heterodimers. In terms of tissue distribution, highly expressed in flowers. Expressed in roots and shoots.

The protein localises to the nucleus. Aux/IAA proteins are short-lived transcriptional factors that function as repressors of early auxin response genes at low auxin concentrations. In Oryza sativa subsp. japonica (Rice), this protein is Auxin-responsive protein IAA3 (IAA3).